Consider the following 308-residue polypeptide: D-alanine--D-alanine ligase B (308 aa).

An ATP-grasp domain is found at Lys-102–Glu-302. Position 128-183 (Pro-128–Thr-183) interacts with ATP. Asp-252, Glu-269, and Asn-271 together coordinate Mg(2+).

This sequence belongs to the D-alanine--D-alanine ligase family. Requires Mg(2+) as cofactor. The cofactor is Mn(2+).

It localises to the cytoplasm. It catalyses the reaction 2 D-alanine + ATP = D-alanyl-D-alanine + ADP + phosphate + H(+). It participates in cell wall biogenesis; peptidoglycan biosynthesis. Its function is as follows. Cell wall formation. In Brucella suis biovar 1 (strain 1330), this protein is D-alanine--D-alanine ligase B.